Reading from the N-terminus, the 153-residue chain is Subtilisin propeptide-like protein (153 aa).

The N-terminal stretch at 1 to 27 is a signal peptide; it reads MKFLFAFNFFSLYIYLYEFLCIHLCGS. The segment at 127–153 is dispensable for parasite growth in host erythrocytes; it reads QISHLSEFIQYLLNKNVCIEFNQNVML.

The protein resides in the secreted. It localises to the parasitophorous vacuole lumen. It is found in the cell membrane. Acts as a specific inhibitor of subtilisin-like protease SUB1. In Plasmodium falciparum (isolate 3D7), this protein is Subtilisin propeptide-like protein.